Consider the following 211-residue polypeptide: Ubiquitin-conjugating enzyme E2 S (211 aa).

The UBC core domain occupies 11–157 (HIIRQVYKEV…ARLMTEIHAQ (147 aa)). Cysteine 95 functions as the Glycyl thioester intermediate in the catalytic mechanism. The interval 157–211 (QGSSLRGKDPTDPCSSASATLVSGDGPMAKKHAGDRDKKLAAKKKTDKKRALRRL) is disordered. A compositionally biased stretch (basic residues) spans 197-211 (AAKKKTDKKRALRRL).

Belongs to the ubiquitin-conjugating enzyme family.

The enzyme catalyses S-ubiquitinyl-[E1 ubiquitin-activating enzyme]-L-cysteine + [E2 ubiquitin-conjugating enzyme]-L-cysteine = [E1 ubiquitin-activating enzyme]-L-cysteine + S-ubiquitinyl-[E2 ubiquitin-conjugating enzyme]-L-cysteine.. It participates in protein modification; protein ubiquitination. Functionally, catalyzes the covalent attachment of ubiquitin to other proteins. Acts as an essential factor of the anaphase promoting complex/cyclosome (APC/C), a cell cycle-regulated ubiquitin ligase that controls progression through mitosis. Acts by specifically elongating 'Lys-11'-linked polyubiquitin chains initiated by the E2 enzyme ube2c/ubch10 on APC/C substrates, enhancing the degradation of APC/C substrates by the proteasome and promoting mitotic exit. The polypeptide is Ubiquitin-conjugating enzyme E2 S (ube2s) (Xenopus tropicalis (Western clawed frog)).